The chain runs to 346 residues: Quinolinate synthase (346 aa).

Iminosuccinate contacts are provided by His-47 and Ser-68. Cys-113 serves as a coordination point for [4Fe-4S] cluster. Iminosuccinate-binding positions include 139 to 141 (YAN) and Ser-156. Cys-200 is a binding site for [4Fe-4S] cluster. Residues 226-228 (HPE) and Thr-243 contribute to the iminosuccinate site. Cys-297 is a binding site for [4Fe-4S] cluster.

It belongs to the quinolinate synthase family. Type 1 subfamily. [4Fe-4S] cluster serves as cofactor.

Its subcellular location is the cytoplasm. The enzyme catalyses iminosuccinate + dihydroxyacetone phosphate = quinolinate + phosphate + 2 H2O + H(+). The protein operates within cofactor biosynthesis; NAD(+) biosynthesis; quinolinate from iminoaspartate: step 1/1. In terms of biological role, catalyzes the condensation of iminoaspartate with dihydroxyacetone phosphate to form quinolinate. The sequence is that of Quinolinate synthase from Pseudoalteromonas translucida (strain TAC 125).